Reading from the N-terminus, the 799-residue chain is Lon protease (799 aa).

Residues 7 to 200 form the Lon N-terminal domain; the sequence is LPVLPLRDIV…KVFALMEGEI (194 aa). 352–359 contacts ATP; that stretch reads GPPGVGKT. Residues 587–768 form the Lon proteolytic domain; the sequence is VDQVGIVTGL…DEVLKHALTG (182 aa). Active-site residues include Ser674 and Lys717. Positions 772–799 are disordered; the sequence is PVEWNEAEEPITTSAKKDDGDSDAMLTH.

The protein belongs to the peptidase S16 family. As to quaternary structure, homohexamer. Organized in a ring with a central cavity.

The protein localises to the cytoplasm. It carries out the reaction Hydrolysis of proteins in presence of ATP.. Its function is as follows. ATP-dependent serine protease that mediates the selective degradation of mutant and abnormal proteins as well as certain short-lived regulatory proteins. Required for cellular homeostasis and for survival from DNA damage and developmental changes induced by stress. Degrades polypeptides processively to yield small peptide fragments that are 5 to 10 amino acids long. Binds to DNA in a double-stranded, site-specific manner. CcrM is an important target of the Lon protease pathway in C.crescentus. In Caulobacter vibrioides (strain ATCC 19089 / CIP 103742 / CB 15) (Caulobacter crescentus), this protein is Lon protease.